The following is a 131-amino-acid chain: Small ribosomal subunit protein uS8c (131 aa).

Belongs to the universal ribosomal protein uS8 family. As to quaternary structure, part of the 30S ribosomal subunit.

The protein resides in the plastid. It localises to the chloroplast. One of the primary rRNA binding proteins, it binds directly to 16S rRNA central domain where it helps coordinate assembly of the platform of the 30S subunit. The polypeptide is Small ribosomal subunit protein uS8c (rps8) (Tupiella akineta (Green alga)).